We begin with the raw amino-acid sequence, 530 residues long: MFS transporter PfmaC (530 aa).

Residues T41–F76 are disordered. The segment covering T42 to G56 has biased composition (polar residues). Low complexity predominate over residues A59 to G69. A run of 10 helical transmembrane segments spans residues Y165–Y182, F195–W215, A226–L246, W261–F281, I324–V344, N369–S389, G396–W416, L422–G442, A456–L476, and P493–L513.

Belongs to the major facilitator superfamily. Allantoate permease family.

The protein resides in the cell membrane. MFS transporter; part of the gene cluster that mediates the biosynthesis of dihydroxynaphthalene (DHN)-melanin, a bluish-green pigment forming a dark layer in the conidial wall that protects the conidia from UV radiations. The chain is MFS transporter PfmaC from Pestalotiopsis fici (strain W106-1 / CGMCC3.15140).